Consider the following 158-residue polypeptide: Transcription elongation factor GreA (158 aa).

Positions 48–75 (NSEYDSAKEDQAFVEGRIAQLEKMIRNA) form a coiled coil.

The protein belongs to the GreA/GreB family.

Functionally, necessary for efficient RNA polymerase transcription elongation past template-encoded arresting sites. The arresting sites in DNA have the property of trapping a certain fraction of elongating RNA polymerases that pass through, resulting in locked ternary complexes. Cleavage of the nascent transcript by cleavage factors such as GreA or GreB allows the resumption of elongation from the new 3'terminus. GreA releases sequences of 2 to 3 nucleotides. This is Transcription elongation factor GreA from Shouchella clausii (strain KSM-K16) (Alkalihalobacillus clausii).